The chain runs to 391 residues: Succinyl-diaminopimelate desuccinylase (391 aa).

His-67 provides a ligand contact to Zn(2+). Asp-69 is a catalytic residue. Residue Asp-101 participates in Zn(2+) binding. Catalysis depends on Glu-135, which acts as the Proton acceptor. 3 residues coordinate Zn(2+): Glu-136, Glu-164, and His-353.

It belongs to the peptidase M20A family. DapE subfamily. Homodimer. It depends on Zn(2+) as a cofactor. Co(2+) serves as cofactor.

The enzyme catalyses N-succinyl-(2S,6S)-2,6-diaminopimelate + H2O = (2S,6S)-2,6-diaminopimelate + succinate. It participates in amino-acid biosynthesis; L-lysine biosynthesis via DAP pathway; LL-2,6-diaminopimelate from (S)-tetrahydrodipicolinate (succinylase route): step 3/3. Catalyzes the hydrolysis of N-succinyl-L,L-diaminopimelic acid (SDAP), forming succinate and LL-2,6-diaminopimelate (DAP), an intermediate involved in the bacterial biosynthesis of lysine and meso-diaminopimelic acid, an essential component of bacterial cell walls. The polypeptide is Succinyl-diaminopimelate desuccinylase (Rickettsia bellii (strain OSU 85-389)).